The primary structure comprises 361 residues: Phospho-N-acetylmuramoyl-pentapeptide-transferase (361 aa).

A run of 10 helical transmembrane segments spans residues 25-45, 72-92, 95-115, 135-155, 169-189, 200-220, 240-260, 264-284, 289-309, and 338-358; these read TGGA…WIID, TPTM…VLWA, LNPY…VGFY, LLIE…LGRA, VMLN…VGAG, GLAI…SYLA, LAVL…FNAP, IFMG…IAVA, IVLA…IVQV, and QIVI…LSTL.

This sequence belongs to the glycosyltransferase 4 family. MraY subfamily. Mg(2+) is required as a cofactor.

The protein localises to the cell inner membrane. The catalysed reaction is UDP-N-acetyl-alpha-D-muramoyl-L-alanyl-gamma-D-glutamyl-meso-2,6-diaminopimeloyl-D-alanyl-D-alanine + di-trans,octa-cis-undecaprenyl phosphate = di-trans,octa-cis-undecaprenyl diphospho-N-acetyl-alpha-D-muramoyl-L-alanyl-D-glutamyl-meso-2,6-diaminopimeloyl-D-alanyl-D-alanine + UMP. It participates in cell wall biogenesis; peptidoglycan biosynthesis. Its function is as follows. Catalyzes the initial step of the lipid cycle reactions in the biosynthesis of the cell wall peptidoglycan: transfers peptidoglycan precursor phospho-MurNAc-pentapeptide from UDP-MurNAc-pentapeptide onto the lipid carrier undecaprenyl phosphate, yielding undecaprenyl-pyrophosphoryl-MurNAc-pentapeptide, known as lipid I. The protein is Phospho-N-acetylmuramoyl-pentapeptide-transferase of Rhodopseudomonas palustris (strain TIE-1).